The sequence spans 396 residues: Phosphoglycerate kinase (396 aa).

Substrate is bound by residues 23-25, Arg-38, 61-64, Arg-122, and Arg-155; these read DFN and HMGK. Residues Lys-206, Gly-296, Glu-327, and 353-356 each bind ATP; that span reads GGDS.

The protein belongs to the phosphoglycerate kinase family. As to quaternary structure, monomer.

The protein localises to the cytoplasm. It catalyses the reaction (2R)-3-phosphoglycerate + ATP = (2R)-3-phospho-glyceroyl phosphate + ADP. Its pathway is carbohydrate degradation; glycolysis; pyruvate from D-glyceraldehyde 3-phosphate: step 2/5. The polypeptide is Phosphoglycerate kinase (Clostridium botulinum (strain Alaska E43 / Type E3)).